The sequence spans 375 residues: G-protein coupled estrogen receptor 1 (375 aa).

N-acetylmethionine is present on Met-1. Topologically, residues 1–62 are extracellular; that stretch reads MAATTPAQDV…QQYVIALFLS (62 aa). N-linked (GlcNAc...) asparagine glycans are attached at residues Asn-32 and Asn-44. A helical membrane pass occupies residues 63-84; that stretch reads CLYTIFLFPIGFVGNILILVVN. The Cytoplasmic segment spans residues 85 to 96; the sequence is ISFREKMTIPDL. Residues 97 to 120 form a helical membrane-spanning segment; the sequence is YFINLAAADLILVADSLIEVFNLD. Residues 121-132 lie on the Extracellular side of the membrane; it reads EQYYDIAVLCTF. Residues Cys-130 and Cys-207 are joined by a disulfide bond. The chain crosses the membrane as a helical span at residues 133-153; that stretch reads MSLFLQINMYSSVFFLTWMSF. The Cytoplasmic segment spans residues 154 to 175; that stretch reads DRYLALAKAMRCGLFRTKHHAR. Residues 176–194 traverse the membrane as a helical segment; that stretch reads LSCGLIWMASVSATLVPFT. The Extracellular segment spans residues 195–220; the sequence is AVHLRHTEEACFCFADVREVQWLEVT. The chain crosses the membrane as a helical span at residues 221–236; sequence LGFIVPFAIIGLCYSL. The Cytoplasmic segment spans residues 237 to 259; it reads IVRALIRAHRHRGLRPRRQKALR. The helical transmembrane segment at 260–280 threads the bilayer; that stretch reads MIFAVVLVFFICWLPENVFIS. Residues 281–306 lie on the Extracellular side of the membrane; sequence VHLLQWAQPGDTPCKQSFRHAYPLTG. A helical transmembrane segment spans residues 307-327; it reads HIVNLAAFSNSCLSPLIYSFL. The Cytoplasmic portion of the chain corresponds to 328 to 375; it reads GETFRDKLRLYVAQKTSLPALNRFCHATLKAVIPDSTEQSDVKFSSAV.

Belongs to the G-protein coupled receptor 1 family. As to quaternary structure, homodimer. Heterodimer; heterodimerizes with other G-protein-coupled receptor (GPCRs) like CRHR1, HTR1A and PAQR8. Interacts with RAMP3; the interaction confers proper subcellular localization and function in cardioprotection. Interacts with KRT7 and KRT8. Interacts with EGFR; the interaction increases after agonist-induced stimulation in cancer-associated fibroblasts (CAF). Interacts with EGFR and ESR1. Interacts (via C-terminus tail motif) with DLG4 (via N-terminus tandem pair of PDZ domains); the interaction is direct and induces the increase of GPER1 protein levels residing at the plasma membrane surface in a estradiol-independent manner. Ubiquitinated; ubiquitination occurs at the plasma membrane and leads to proteasome-mediated degradation. In terms of processing, glycosylated. In terms of tissue distribution, expressed in the brain. Expressed in neurons of the hippocampus, hypothalamic paraventricular nucleus (PVN), supraoptic nucleus (SON) and the median eminence. Expressed in magnocellular neurosecretory cells (MNCs) which secrete oxytocin but not in MNCs which secrete vasopressin. Expressed in glial cells. Expressed in the nucleus ambiguous. Expressed in epithelial cells, in pachytene spermatocytes (PS) (at protein level). Expressed strongly in vascular endothelial cells and poorly in vascular smooth muscle cells (VSMC). Expressed in the brain, lung, pituitary gland, adrenal medulla, renal pelvis and ovary. Expressed in CA1 hippocampus. Expressed weakly in heart, skeletal muscle and kidney.

It localises to the nucleus. The protein localises to the cytoplasm. Its subcellular location is the perinuclear region. The protein resides in the cytoskeleton. It is found in the cytoplasmic vesicle membrane. It localises to the cell membrane. The protein localises to the basolateral cell membrane. Its subcellular location is the endoplasmic reticulum membrane. The protein resides in the early endosome. It is found in the recycling endosome. It localises to the golgi apparatus. The protein localises to the trans-Golgi network. Its subcellular location is the golgi apparatus membrane. The protein resides in the cell projection. It is found in the dendrite. It localises to the dendritic spine membrane. The protein localises to the axon. Its subcellular location is the postsynaptic density. The protein resides in the mitochondrion membrane. Functionally, G-protein coupled estrogen receptor that binds to 17-beta-estradiol (E2) with high affinity, leading to rapid and transient activation of numerous intracellular signaling pathways. Stimulates cAMP production, calcium mobilization and tyrosine kinase Src inducing the release of heparin-bound epidermal growth factor (HB-EGF) and subsequent transactivation of the epidermal growth factor receptor (EGFR), activating downstream signaling pathways such as PI3K/Akt and ERK/MAPK. Mediates pleiotropic functions among others in the cardiovascular, endocrine, reproductive, immune and central nervous systems. Has a role in cardioprotection by reducing cardiac hypertrophy and perivascular fibrosis in a RAMP3-dependent manner. Regulates arterial blood pressure by stimulating vasodilation and reducing vascular smooth muscle and microvascular endothelial cell proliferation. Plays a role in blood glucose homeostasis contributing to the insulin secretion response by pancreatic beta cells. Triggers mitochondrial apoptosis during pachytene spermatocyte differentiation. Stimulates uterine epithelial cell proliferation. Enhances uterine contractility in response to oxytocin. Contributes to thymic atrophy by inducing apoptosis. Attenuates TNF-mediated endothelial expression of leukocyte adhesion molecules. Promotes neuritogenesis in developing hippocampal neurons. Plays a role in acute neuroprotection against NMDA-induced excitotoxic neuronal death. Increases firing activity and intracellular calcium oscillations in luteinizing hormone-releasing hormone (LHRH) neurons. Inhibits early osteoblast proliferation at growth plate during skeletal development. Inhibits mature adipocyte differentiation and lipid accumulation. Involved in the recruitment of beta-arrestin 2 ARRB2 at the plasma membrane in epithelial cells. Also functions as a receptor for aldosterone mediating rapid regulation of vascular contractibility through the PI3K/ERK signaling pathway. Involved in cancer progression regulation. Stimulates cancer-associated fibroblast (CAF) proliferation by a rapid genomic response through the EGFR/ERK transduction pathway. Associated with EGFR, may act as a transcription factor activating growth regulatory genes (c-fos, cyclin D1). Promotes integrin alpha-5/beta-1 and fibronectin (FN) matrix assembly in breast cancer cells. The protein is G-protein coupled estrogen receptor 1 (Gper1) of Rattus norvegicus (Rat).